The following is a 62-amino-acid chain: Large ribosomal subunit protein uL30 (62 aa).

It belongs to the universal ribosomal protein uL30 family. Part of the 50S ribosomal subunit.

The chain is Large ribosomal subunit protein uL30 from Shouchella clausii (strain KSM-K16) (Alkalihalobacillus clausii).